Reading from the N-terminus, the 600-residue chain is 69 kDa paraflagellar rod protein (600 aa).

The interval 335–355 (DKQDEAWRRIQELERVLQRLG) is calmodulin-binding.

In terms of assembly, heterodimer of a 69 kDa and a 73 kDa protein.

The protein resides in the cell projection. The protein localises to the cilium. It localises to the flagellum. Its subcellular location is the cytoplasm. It is found in the cytoskeleton. Major component of the paraflagellar rod (PFR). The PFR is a highly ordered lattices of fibrous proteins that are located inside the flagellum and assume a fixed orientation with respect to the microtubular axoneme. The polypeptide is 69 kDa paraflagellar rod protein (PFRA) (Trypanosoma brucei brucei).